A 393-amino-acid chain; its full sequence is Putative odorant receptor 69a, isoform A (393 aa).

At 1–39 (MQLHDHMKYIDLGCKMACIPRYQWKGRPTERQFYASEQR) the chain is on the cytoplasmic side. The helical transmembrane segment at 40–60 (IVFLLGTICQIFQITGVLIYW) threads the bilayer. The Extracellular segment spans residues 61 to 76 (YCNGRLATETGTFVAQ). A helical transmembrane segment spans residues 77–97 (LSEMCSSFCLTFVGFCNVYAI). Residues 98-139 (STNRNQIETLLEELHQIYPRYRKNHYRCQHYFDMAMTIMRIE) lie on the Cytoplasmic side of the membrane. A helical membrane pass occupies residues 140–160 (FLFYMILYVYYNSAPLWVLLW). At 161-189 (EHLHEEYDLSFKTQTNTWFPWKVHGSALG) the chain is on the extracellular side. The chain crosses the membrane as a helical span at residues 190–210 (FGMAVLSITVGSFVGVGFSIV). The Cytoplasmic portion of the chain corresponds to 211–269 (TQNLICLLTFQLKLHYDGISSQLVSLDCRRPGAHKELSILIAHHSRILQLGDQVNDIMN). The chain crosses the membrane as a helical span at residues 270–290 (FVFGSSLVGATIAICMSSVSI). Residues 291-304 (MLLDLASAFKYASG) lie on the Extracellular side of the membrane. The helical transmembrane segment at 305 to 325 (LVAFVLYNFVICYMGTEVTLA) threads the bilayer. Over 326–365 (SGKVLPAAFYNNWYEGDLVYRRMLLILMMRATKPYMWKTY) the chain is Cytoplasmic. A helical membrane pass occupies residues 366–386 (KLAPVSITTYMATLKFSYQMF). At 387 to 393 (TCVRSLK) the chain is on the extracellular side.

It belongs to the insect chemoreceptor superfamily. Heteromeric odorant receptor channel (TC 1.A.69) family. Or49a subfamily. As to quaternary structure, interacts with Orco. Complexes exist early in the endomembrane system in olfactory sensory neurons (OSNs), coupling these complexes to the conserved ciliary trafficking pathway. In terms of tissue distribution, expressed in olfactory sensory neurons in the antenna.

Its subcellular location is the cell membrane. Odorant receptor which mediates acceptance or avoidance behavior, depending on its substrates. The odorant receptor repertoire encodes a large collection of odor stimuli that vary widely in identity, intensity, and duration. May form a complex with Orco to form odorant-sensing units, providing sensitive and prolonged odorant signaling and calcium permeability. The polypeptide is Putative odorant receptor 69a, isoform A (Or69a) (Drosophila melanogaster (Fruit fly)).